The primary structure comprises 330 residues: Trans-1,2-dihydrobenzene-1,2-diol dehydrogenase (330 aa).

Belongs to the Gfo/Idh/MocA family. In terms of assembly, homodimer.

It carries out the reaction (1R,2R)-1,2-dihydrobenzene-1,2-diol + NADP(+) = catechol + NADPH + H(+). It catalyses the reaction D-xylose + NADP(+) = D-xylono-1,5-lactone + NADPH + H(+). The protein is Trans-1,2-dihydrobenzene-1,2-diol dehydrogenase (dhdh) of Xenopus tropicalis (Western clawed frog).